We begin with the raw amino-acid sequence, 262 residues long: tRNA (guanine-N(1)-)-methyltransferase (262 aa).

Residues Gly-113 and 137–142 (IGDYVL) contribute to the S-adenosyl-L-methionine site.

It belongs to the RNA methyltransferase TrmD family. As to quaternary structure, homodimer.

Its subcellular location is the cytoplasm. It carries out the reaction guanosine(37) in tRNA + S-adenosyl-L-methionine = N(1)-methylguanosine(37) in tRNA + S-adenosyl-L-homocysteine + H(+). In terms of biological role, specifically methylates guanosine-37 in various tRNAs. The protein is tRNA (guanine-N(1)-)-methyltransferase of Saccharopolyspora erythraea (strain ATCC 11635 / DSM 40517 / JCM 4748 / NBRC 13426 / NCIMB 8594 / NRRL 2338).